The following is a 362-amino-acid chain: Glutaminase-asparaginase (362 aa).

The first 25 residues, 1-25 (MKSALKTFVPGALALLLLFPVAAQA), serve as a signal peptide directing secretion. An Asparaginase/glutaminase domain is found at 35-362 (ANVVILATGG…KELQRMFWEY (328 aa)). Thr-45 functions as the Acyl-ester intermediate in the catalytic mechanism. Residues Ser-92 and 125–126 (TD) each bind substrate.

It belongs to the asparaginase 1 family. As to quaternary structure, homotetramer.

Its subcellular location is the periplasm. It carries out the reaction L-glutamine + H2O = L-glutamate + NH4(+). The enzyme catalyses L-asparagine + H2O = L-aspartate + NH4(+). The chain is Glutaminase-asparaginase from Pseudomonas fluorescens biotype A.